We begin with the raw amino-acid sequence, 261 residues long: Imidazole glycerol phosphate synthase subunit HisF (261 aa).

Residues Asp12 and Asp131 contribute to the active site.

Belongs to the HisA/HisF family. Heterodimer of HisH and HisF.

It localises to the cytoplasm. The catalysed reaction is 5-[(5-phospho-1-deoxy-D-ribulos-1-ylimino)methylamino]-1-(5-phospho-beta-D-ribosyl)imidazole-4-carboxamide + L-glutamine = D-erythro-1-(imidazol-4-yl)glycerol 3-phosphate + 5-amino-1-(5-phospho-beta-D-ribosyl)imidazole-4-carboxamide + L-glutamate + H(+). It participates in amino-acid biosynthesis; L-histidine biosynthesis; L-histidine from 5-phospho-alpha-D-ribose 1-diphosphate: step 5/9. Functionally, IGPS catalyzes the conversion of PRFAR and glutamine to IGP, AICAR and glutamate. The HisF subunit catalyzes the cyclization activity that produces IGP and AICAR from PRFAR using the ammonia provided by the HisH subunit. The protein is Imidazole glycerol phosphate synthase subunit HisF of Brucella abortus (strain S19).